Consider the following 591-residue polypeptide: Aspartate--tRNA(Asp/Asn) ligase (591 aa).

E176 serves as a coordination point for L-aspartate. The interval 200 to 203 (QLFK) is aspartate. L-aspartate is bound at residue R222. ATP is bound by residues 222–224 (RDE) and Q231. H450 contributes to the L-aspartate binding site. An ATP-binding site is contributed by E484. R491 provides a ligand contact to L-aspartate. 536 to 539 (GLDR) is a binding site for ATP.

Belongs to the class-II aminoacyl-tRNA synthetase family. Type 1 subfamily. In terms of assembly, homodimer.

It is found in the cytoplasm. The catalysed reaction is tRNA(Asx) + L-aspartate + ATP = L-aspartyl-tRNA(Asx) + AMP + diphosphate. Its function is as follows. Aspartyl-tRNA synthetase with relaxed tRNA specificity since it is able to aspartylate not only its cognate tRNA(Asp) but also tRNA(Asn). Reaction proceeds in two steps: L-aspartate is first activated by ATP to form Asp-AMP and then transferred to the acceptor end of tRNA(Asp/Asn). The chain is Aspartate--tRNA(Asp/Asn) ligase from Bacillus cereus (strain ATCC 10987 / NRS 248).